The sequence spans 476 residues: Abscisic acid 8'-hydroxylase CYP707A1 (476 aa).

Residues 5 to 25 (FEIFLYISMFVLGYLSYYFCF) traverse the membrane as a helical segment. Cys-422 is a heme binding site.

Belongs to the cytochrome P450 family. The cofactor is heme. In terms of tissue distribution, expressed in ovaries (specifically in ovules and placenta), sepals, petals and pedicels.

It localises to the membrane. It carries out the reaction 2-cis-(+)-abscisate + reduced [NADPH--hemoprotein reductase] + O2 = (+)-8'-hydroxyabscisate + oxidized [NADPH--hemoprotein reductase] + H2O + H(+). It functions in the pathway plant hormone degradation; abscisic acid degradation. Involved in the oxidative degradation of abscisic acid, especially in pollinated ovaries. The sequence is that of Abscisic acid 8'-hydroxylase CYP707A1 from Solanum lycopersicum (Tomato).